The sequence spans 317 residues: Acetylglutamate kinase (317 aa).

Substrate contacts are provided by residues 75–76 (GG), Arg97, and Asn196.

This sequence belongs to the acetylglutamate kinase family. ArgB subfamily.

It localises to the cytoplasm. It carries out the reaction N-acetyl-L-glutamate + ATP = N-acetyl-L-glutamyl 5-phosphate + ADP. It participates in amino-acid biosynthesis; L-arginine biosynthesis; N(2)-acetyl-L-ornithine from L-glutamate: step 2/4. Its function is as follows. Catalyzes the ATP-dependent phosphorylation of N-acetyl-L-glutamate. The polypeptide is Acetylglutamate kinase (Corynebacterium jeikeium (strain K411)).